The chain runs to 235 residues: Uridylate kinase (235 aa).

9–12 lines the ATP pocket; that stretch reads KLSG. UMP is bound at residue G51. ATP contacts are provided by G52 and R56. Residues D71 and 133 to 140 contribute to the UMP site; that span reads SGNPFFTT. 3 residues coordinate ATP: T160, Y166, and D169.

This sequence belongs to the UMP kinase family. Homohexamer.

The protein resides in the cytoplasm. The catalysed reaction is UMP + ATP = UDP + ADP. Its pathway is pyrimidine metabolism; CTP biosynthesis via de novo pathway; UDP from UMP (UMPK route): step 1/1. Its activity is regulated as follows. Inhibited by UTP. In terms of biological role, catalyzes the reversible phosphorylation of UMP to UDP. The chain is Uridylate kinase from Gloeobacter violaceus (strain ATCC 29082 / PCC 7421).